Consider the following 511-residue polypeptide: Dopamine receptor 1 (511 aa).

The N-terminal stretch at 1–19 (MYTPHPFGFLIILVPMTNA) is a signal peptide. The Extracellular segment spans residues 20–142 (MRAIAAIAAG…EEPEPLSLVS (123 aa)). Residues Asn-53, Asn-63, Asn-74, Asn-117, and Asn-123 are each glycosylated (N-linked (GlcNAc...) asparagine). A helical transmembrane segment spans residues 143-169 (IVVVGIFLSVLIFLSVAGNILVCLAIY). Topologically, residues 170-179 (TERSLRRIGN) are cytoplasmic. A helical transmembrane segment spans residues 180–206 (LFLASLAIADLFVASLVMTFAGVNDLL). Over 207–216 (GYWIFGAQFC) the chain is Extracellular. A disulfide bridge connects residues Cys-216 and Cys-302. The chain crosses the membrane as a helical span at residues 217–239 (DTWVAFDVMCSTASILNLCAISM). Residues 240–258 (DRYIHIKDPLRYGRWVTRR) are Cytoplasmic-facing. The chain crosses the membrane as a helical span at residues 259-279 (VAVITIAAIWLLAAFVSFVPI). Over 280-310 (SLGIHRPDQPLIFEDNGKKYPTCALDLTPTY) the chain is Extracellular. The chain crosses the membrane as a helical span at residues 311-331 (AVVSSCISFYFPCVVMIGIYC). At 332–391 (RLYCYAQKHVKSIKAVTRPGEVAEKQRYKSIRRPKNQPKKFKVRNLHTHSSPYHVSDHKA) the chain is on the cytoplasmic side. The chain crosses the membrane as a helical span at residues 392–412 (AVTVGVIMGVFLICWVPFFCV). The Extracellular segment spans residues 413 to 427 (NITAAFCKTCIGGQT). A helical transmembrane segment spans residues 428-450 (FKILTWLGYSNSAFNPIIYSIFN). At 451-511 (KEFRDAFKRI…SAELEQVSAI (61 aa)) the chain is on the cytoplasmic side. S-palmitoyl cysteine attachment occurs at residues Cys-468 and Cys-469.

The protein belongs to the G-protein coupled receptor 1 family. Expressed in the larval and adult CNS in structures that mediate higher-order brain functions such as learning, memory and motor control: in the mushroom body neuropil and four unpaired neurons in each thoracic segment. The adult CNS has intense expression in the central complex, moderate expression in several neurosecretory cells, and weak expression in two unpaired neurons in the mesothoracic neuromere. Also seen in the somata of the optic lobes.

The protein resides in the cell membrane. In terms of biological role, receptor for dopamine. The activity of this receptor is mediated by G proteins which activate adenylyl cyclase. Might be involved in the processing of visual information and/or visual learning. Important for Pavlovian conditioning: required in the mushroom body as a receptor conveying unconditional stimuli information, has a role in memory formation for aversive and appetitive learning. Sleep-deprivation-induced impairments in learning can be partially explained through alterations in dopamine signaling, Dop1R1 expression levels are reduced; sleep may have a role in restoring dopamine homeostasis. The sequence is that of Dopamine receptor 1 (Dop1R1) from Drosophila melanogaster (Fruit fly).